The primary structure comprises 670 residues: Alpha-1,4-glucan:maltose-1-phosphate maltosyltransferase (670 aa).

Lysine 262, glutamine 322, and aspartate 357 together coordinate alpha-maltose 1-phosphate. Aspartate 393 functions as the Nucleophile in the catalytic mechanism. Residue asparagine 394 coordinates alpha-maltose 1-phosphate. Glutamate 422 acts as the Proton donor in catalysis. 534–535 is an alpha-maltose 1-phosphate binding site; the sequence is KY.

The protein belongs to the glycosyl hydrolase 13 family. GlgE subfamily. Homodimer.

It catalyses the reaction alpha-maltose 1-phosphate + [(1-&gt;4)-alpha-D-glucosyl](n) = [(1-&gt;4)-alpha-D-glucosyl](n+2) + phosphate. Its function is as follows. Maltosyltransferase that uses maltose 1-phosphate (M1P) as the sugar donor to elongate linear or branched alpha-(1-&gt;4)-glucans. Is involved in a branched alpha-glucan biosynthetic pathway from trehalose, together with TreS, Mak and GlgB. The chain is Alpha-1,4-glucan:maltose-1-phosphate maltosyltransferase from Chlorobaculum tepidum (strain ATCC 49652 / DSM 12025 / NBRC 103806 / TLS) (Chlorobium tepidum).